The chain runs to 204 residues: Holliday junction branch migration complex subunit RuvA (204 aa).

The interval 1 to 64 is domain I; that stretch reads MIGRLQGILL…EDAHLLFGFA (64 aa). Positions 65–143 are domain II; sequence QKTDRTLFRE…GVKQSDFFVE (79 aa). Residues 144–155 form a flexible linker region; it reads STHIPLSPSIES. A domain III region spans residues 156-204; sequence HSESSSDEAISALIALGYKPAEAEKMVKRVAKPELTSEQVIREALKAAL.

It belongs to the RuvA family. Homotetramer. Forms an RuvA(8)-RuvB(12)-Holliday junction (HJ) complex. HJ DNA is sandwiched between 2 RuvA tetramers; dsDNA enters through RuvA and exits via RuvB. An RuvB hexamer assembles on each DNA strand where it exits the tetramer. Each RuvB hexamer is contacted by two RuvA subunits (via domain III) on 2 adjacent RuvB subunits; this complex drives branch migration. In the full resolvosome a probable DNA-RuvA(4)-RuvB(12)-RuvC(2) complex forms which resolves the HJ.

The protein resides in the cytoplasm. Its function is as follows. The RuvA-RuvB-RuvC complex processes Holliday junction (HJ) DNA during genetic recombination and DNA repair, while the RuvA-RuvB complex plays an important role in the rescue of blocked DNA replication forks via replication fork reversal (RFR). RuvA specifically binds to HJ cruciform DNA, conferring on it an open structure. The RuvB hexamer acts as an ATP-dependent pump, pulling dsDNA into and through the RuvAB complex. HJ branch migration allows RuvC to scan DNA until it finds its consensus sequence, where it cleaves and resolves the cruciform DNA. This Haemophilus influenzae (strain PittGG) protein is Holliday junction branch migration complex subunit RuvA.